A 113-amino-acid chain; its full sequence is Iron-sulfur cluster insertion protein ErpA (113 aa).

Iron-sulfur cluster-binding residues include Cys41, Cys105, and Cys107.

The protein belongs to the HesB/IscA family. As to quaternary structure, homodimer. Iron-sulfur cluster is required as a cofactor.

Functionally, required for insertion of 4Fe-4S clusters for at least IspG. This chain is Iron-sulfur cluster insertion protein ErpA, found in Actinobacillus pleuropneumoniae serotype 5b (strain L20).